The sequence spans 911 residues: Alpha-actinin-4 (911 aa).

The segment at 1–269 is actin-binding; the sequence is MVDYHAANQS…YVSSFYHAFS (269 aa). An interaction with VCL region spans residues 12–26; the sequence is QYGPSSAGNGAGGGG. Tyrosine 31 is subject to Phosphotyrosine. Residues 40–61 are interaction with VCL; it reads RDLLLDPAWEKQQRKTFTAWCN. Calponin-homology (CH) domains lie at 50 to 154 and 163 to 269; these read KQQR…LRFA and TSAK…HAFS. The LXXLL motif motif lies at 84-88; that stretch reads LMLLL. Residues 108–126 form an interaction with VCL region; that stretch reads KINNVNKALDFIASKGVKL. Lysine 114 carries the N6-acetyllysine modification. Positions 177 to 192 are polyphosphoinositide (PIP2)-binding; it reads TAPYKNVNVQNFHISW. The residue at position 214 (lysine 214) is an N6-acetyllysine. Threonine 249 is modified (phosphothreonine). Spectrin repeat units follow at residues 293-403, 413-518, 528-639, and 649-752; these read HLME…WLLN, HLAE…ALEK, QLHL…ALLE, and HLRR…EVEN. N6-acetyllysine occurs at positions 592 and 625. Serine 696 is subject to Phosphoserine. The mediates interaction with MICALL2 stretch occupies residues 736–911; it reads WEQLLTTIAR…STALYGESDL (176 aa). 2 consecutive EF-hand domains span residues 765–800 and 806–841; these read EQMQ…LGYD and QGEA…ETTD. A Ca(2+)-binding site is contributed by aspartate 778. Residue lysine 779 is modified to N6-acetyllysine. Ca(2+) contacts are provided by aspartate 780 and glutamate 789. An N6-acetyllysine modification is found at lysine 859. The residue at position 909 (serine 909) is a Phosphoserine.

It belongs to the alpha-actinin family. In terms of assembly, homodimer; antiparallel. Binds TRIM3 at the N-terminus. Interacts with MICALL2 (preferentially in opened conformation); stimulated by RAB13 activation. Identified in a complex with CASK, IQGAP1, MAGI2, NPHS1, SPTAN1 and SPTBN1. Identified in a IGF2BP1-dependent mRNP granule complex containing untranslated mRNAs. Component of the CART complex, at least composed of ACTN4, HGS/HRS, MYO5B and TRIM3. Interacts with MAGI1. Interacts with PDLIM2. Interacts with PPARG and RARA. Binds to VCL; this interaction triggers VCL conformational changes. Interacts with SEPTIN14. Interacts with IGSF8. In terms of tissue distribution, widely expressed.

It localises to the nucleus. It is found in the cytoplasm. The protein resides in the cell junction. Its subcellular location is the cytoskeleton. The protein localises to the stress fiber. It localises to the perinuclear region. F-actin cross-linking protein which is thought to anchor actin to a variety of intracellular structures. This is a bundling protein. Probably involved in vesicular trafficking via its association with the CART complex. The CART complex is necessary for efficient transferrin receptor recycling but not for EGFR degradation. Involved in tight junction assembly in epithelial cells probably through interaction with MICALL2. Links MICALL2 to the actin cytoskeleton and recruits it to the tight junctions. May also function as a transcriptional coactivator, stimulating transcription mediated by the nuclear hormone receptors PPARG and RARA. Association with IGSF8 regulates the immune synapse formation and is required for efficient T-cell activation. The protein is Alpha-actinin-4 of Homo sapiens (Human).